Here is a 798-residue protein sequence, read N- to C-terminus: Protocadherin beta-13 (798 aa).

The first 28 residues, 1–28 (MEASGKLICRQRQVLFSFLLLGLSLAGA), serve as a signal peptide directing secretion. At 29-690 (AEPRSYSVVE…AQADLLTVYL (662 aa)) the chain is on the extracellular side. Cadherin domains are found at residues 36–134 (VVEE…SPVF), 139–243 (MLVK…APEF), 248–348 (YRVQ…APEV), 353–451 (FTSP…APAF), and 456–561 (YTLF…SPFV). 2 N-linked (GlcNAc...) asparagine glycosylation sites follow: Asn-418 and Asn-436. Asn-567 is a glycosylation site (N-linked (GlcNAc...) asparagine). Residues 568–671 (GSAPCTELVP…LVDGFSQPYL (104 aa)) enclose the Cadherin 6 domain. Residues 691 to 711 (VVALASVSSLFLFSVLLFVAV) form a helical membrane-spanning segment. The Cytoplasmic portion of the chain corresponds to 712–798 (RLCRRSRAAS…FPNNFGFNIQ (87 aa)).

The protein localises to the cell membrane. Its function is as follows. Potential calcium-dependent cell-adhesion protein. May be involved in the establishment and maintenance of specific neuronal connections in the brain. The chain is Protocadherin beta-13 (PCDHB13) from Homo sapiens (Human).